The following is a 20-amino-acid chain: Agglutinin beta-2 chain (20 aa).

Residues 1-20 are disordered; it reads GRNGKSQSIIVGPWGDRVTN.

This sequence belongs to the jacalin lectin family. Formed of four alpha chains and four beta chains.

Functionally, D-galactose-specific lectin, binds the T-antigen structure Gal-beta1,3-GalNAc. The sequence is that of Agglutinin beta-2 chain from Maclura pomifera (Osage orange).